The primary structure comprises 397 residues: Growth-regulating factor 5 (397 aa).

In terms of domain architecture, QLQ spans 16–51 (PFTPTQWEELEHQALIYKYMVSGVPVPPELIFSIRR). 2 short sequence motifs (bipartite nuclear localization signal) span residues 78-96 (RKPD…KKWR) and 114-121 (RGRNRARK). The WRC domain occupies 81–125 (DPEPGRCRRTDGKKWRCSREAYPDSKYCEKHMHRGRNRARKSLDQ). 4 disordered regions span residues 108–172 (CEKH…SMDA), 197–217 (LDYP…HHAS), 288–320 (PYHH…DHDH), and 340–397 (VLAN…DTGS). Over residues 111–120 (HMHRGRNRAR) the composition is skewed to basic residues. Over residues 128–172 (TTTTPLTSPSLSFTNNNNPSPTLSSSSSSNSSSTTYSASSSSMDA) the composition is skewed to low complexity. The span at 288 to 298 (PYHHCSTDHNK) shows a compositional bias: basic and acidic residues.

It belongs to the GRF family. Interacts with GIF1. Strongly expressed in actively growing and developing tissues, such as roots, upper stems, and shoot tips containing the shoot apical meristem (SAM) and flower buds. Also expressed in mature flowers, but weakly expressed in mature stems and leaves.

The protein resides in the nucleus. In terms of biological role, transcription activator that plays a role in the regulation of cell expansion in leaf and cotyledons tissues. Acts together with GIF1 for the development of appropriate leaf size and shape through the promotion and/or maintenance of cell proliferation activity in leaf primordia. This Arabidopsis thaliana (Mouse-ear cress) protein is Growth-regulating factor 5 (GRF5).